The following is a 143-amino-acid chain: Zinc-containing ferredoxin (143 aa).

The N-terminal extension stretch occupies residues 13–60 (PIDEHFLENDKDYPVTGQHNGHDVRAEGMQRLDADGKPYPTKLGIHGT). The Zn(2+) site is built by His31, His34, and His58. 2 4Fe-4S ferredoxin-type domains span residues 60–89 (THVA…WNLN) and 115–143 (KCDP…KITP). 2 residues coordinate [3Fe-4S] cluster: Cys69 and Cys75. Position 79 (Cys79) interacts with [4Fe-4S] cluster. Asp117 contributes to the Zn(2+) binding site. [4Fe-4S] cluster is bound by residues Cys124, Cys127, and Cys130. Position 134 (Cys134) interacts with [3Fe-4S] cluster.

Requires [3Fe-4S] cluster as cofactor. It depends on [4Fe-4S] cluster as a cofactor. Zn(2+) serves as cofactor.

Ferredoxins are iron-sulfur proteins that transfer electrons in a wide variety of metabolic reactions. In Thermoplasma acidophilum (strain ATCC 25905 / DSM 1728 / JCM 9062 / NBRC 15155 / AMRC-C165), this protein is Zinc-containing ferredoxin (zfx).